Consider the following 439-residue polypeptide: Type 3 secretion system ATPase (439 aa).

Position 172 to 177 (172 to 177 (GGGKST)) interacts with ATP.

This sequence belongs to the ATPase alpha/beta chains family. T3SS ATPase subfamily. As to quaternary structure, the core secretion machinery of the T3SS is composed of approximately 20 different proteins, including cytoplasmic components, a base, an export apparatus and a needle. This subunit is part of the cytosolic complex. Forms homohexamers.

The protein localises to the cytoplasm. It catalyses the reaction ATP + H2O + cellular proteinSide 1 = ADP + phosphate + cellular proteinSide 2.. Its function is as follows. ATPase component of the type III secretion system (T3SS), also called injectisome, which is used to inject bacterial effector proteins into eukaryotic host cells. Acts as a molecular motor to provide the energy that is required for the export of proteins. Required for type III secretion apparatus (T3SA) formation, proper protein secretion, host cell invasion and virulence. May play a critical role in T3SS substrate recognition, disassembly of the effector/chaperone complex and unfolding of the effector in an ATP-dependent manner prior to secretion. The chain is Type 3 secretion system ATPase from Yersinia pseudotuberculosis serotype I (strain IP32953).